We begin with the raw amino-acid sequence, 409 residues long: Rho-GTPase-activating protein BAG7 (409 aa).

A compositionally biased stretch (polar residues) spans 1-26 (MFNMNLLSTPSSEEGSPQNRSSSMSS). A disordered region spans residues 1 to 32 (MFNMNLLSTPSSEEGSPQNRSSSMSSVEGKKD). A Rho-GAP domain is found at 50-257 (VSLEESLKVA…FLILHASDII (208 aa)). Positions 362–409 (KLLGNVGNSSNTGIKDPTERVPRGEHKTKHKQRQSWLRRLTSPSRTQP) are disordered. Basic and acidic residues predominate over residues 377 to 386 (DPTERVPRGE).

In terms of assembly, interacts with RHO1.

Its function is as follows. Acts in signal transduction. Activates RHO1. This Saccharomyces cerevisiae (strain ATCC 204508 / S288c) (Baker's yeast) protein is Rho-GTPase-activating protein BAG7 (BAG7).